The sequence spans 107 residues: Large ribosomal subunit protein bL21 (107 aa).

Belongs to the bacterial ribosomal protein bL21 family. In terms of assembly, part of the 50S ribosomal subunit. Contacts protein L20.

Functionally, this protein binds to 23S rRNA in the presence of protein L20. In Chlamydia trachomatis serovar L2 (strain ATCC VR-902B / DSM 19102 / 434/Bu), this protein is Large ribosomal subunit protein bL21.